Consider the following 67-residue polypeptide: Large ribosomal subunit protein uL29 (67 aa).

Belongs to the universal ribosomal protein uL29 family.

This chain is Large ribosomal subunit protein uL29, found in Sulfurihydrogenibium sp. (strain YO3AOP1).